Here is a 449-residue protein sequence, read N- to C-terminus: MLCSLSLVLCGLLAGTRADPGGLLRLGMDIMNHEVQSAMEESHILEKMAAEASNPQPGGKAIKGLSNMKVKDVLEPVITLNFVPGVGISQCVSTGMTITGKSFTGGNMEINVVLNITATDRLLQDEEAGTPVFRSEGCEVILVSVKTNLPNNKAINKFVDSTLRKVLPGLMCPAIDAVLEYVNKKWAKLTDPMPVDKMGTVKYALTSPPATTASHIQVDFSPVVQLQEGQLIQLATDGSLPEFPEGSAKDSQLLLSATFLTAELALLQKSLEVKLKDKRVGKLPQNTRTLAGFIPQVAKTYHKPKPLLIKVKINKPPKVTMKAGKSLMHLHGSLEMFAARRHGKHPKSLFRLETHIGLEIHYSVQDNRLQMVTSMDSLLSLARESSSVGDFHEAELTGFITDYLQKAYIPVVNDVLHVGLPLPDLLAINYNLAELDIVEDALVLGLKTE.

Positions 1 to 18 (MLCSLSLVLCGLLAGTRA) are cleaved as a signal peptide. Residue asparagine 115 is glycosylated (N-linked (GlcNAc...) asparagine). Cysteine 138 and cysteine 172 form a disulfide bridge.

Belongs to the BPI/LBP/Plunc superfamily. BPI/LBP family.

The protein localises to the secreted. The sequence is that of BPI fold-containing family B member 6 (Bpifb6) from Mus musculus (Mouse).